The chain runs to 667 residues: Alpha-1,4-glucan:maltose-1-phosphate maltosyltransferase (667 aa).

Alpha-maltose 1-phosphate-binding residues include Lys261, Gln321, and Asp356. Residue Asp392 is the Nucleophile of the active site. Asn393 contacts alpha-maltose 1-phosphate. Glu421 serves as the catalytic Proton donor. Residue 534–535 (KY) coordinates alpha-maltose 1-phosphate.

It belongs to the glycosyl hydrolase 13 family. GlgE subfamily. In terms of assembly, homodimer.

It carries out the reaction alpha-maltose 1-phosphate + [(1-&gt;4)-alpha-D-glucosyl](n) = [(1-&gt;4)-alpha-D-glucosyl](n+2) + phosphate. Functionally, maltosyltransferase that uses maltose 1-phosphate (M1P) as the sugar donor to elongate linear or branched alpha-(1-&gt;4)-glucans. Is involved in a branched alpha-glucan biosynthetic pathway from trehalose, together with TreS, Mak and GlgB. The sequence is that of Alpha-1,4-glucan:maltose-1-phosphate maltosyltransferase from Methylacidiphilum infernorum (isolate V4) (Methylokorus infernorum (strain V4)).